A 123-amino-acid polypeptide reads, in one-letter code: Ribosome-binding factor A (123 aa).

The protein belongs to the RbfA family. In terms of assembly, monomer. Binds 30S ribosomal subunits, but not 50S ribosomal subunits or 70S ribosomes.

It localises to the cytoplasm. Functionally, one of several proteins that assist in the late maturation steps of the functional core of the 30S ribosomal subunit. Associates with free 30S ribosomal subunits (but not with 30S subunits that are part of 70S ribosomes or polysomes). Required for efficient processing of 16S rRNA. May interact with the 5'-terminal helix region of 16S rRNA. The polypeptide is Ribosome-binding factor A (Cupriavidus metallidurans (strain ATCC 43123 / DSM 2839 / NBRC 102507 / CH34) (Ralstonia metallidurans)).